Reading from the N-terminus, the 62-residue chain is MARYRRRSRSRSRSRYRRRRRRRSRGRRRRTYRRSRRHSRRRRGRRRGYSRRRYSRRGRRRY.

The segment at 1-62 is disordered; the sequence is MARYRRRSRS…RYSRRGRRRY (62 aa).

The protein belongs to the protamine P1 family. Testis.

The protein localises to the nucleus. It localises to the chromosome. Its function is as follows. Protamines substitute for histones in the chromatin of sperm during the haploid phase of spermatogenesis. They compact sperm DNA into a highly condensed, stable and inactive complex. The chain is Sperm protamine P1 (PRM1) from Sarcophilus harrisii (Tasmanian devil).